The sequence spans 302 residues: Proteasome subunit beta (302 aa).

Positions 1–50 (MTITGSRGFPDGYLAPGSSFLDFAAQHAPTIMPGTQPTFDTIPQDIAPHG) are cleaved as a propeptide — removed in mature form; by autocatalysis. Thr51 functions as the Nucleophile in the catalytic mechanism. A disordered region spans residues 277–302 (EPGRDGPGNRLPSQGSATIIPESDQS). A compositionally biased stretch (polar residues) spans 287 to 302 (LPSQGSATIIPESDQS).

It belongs to the peptidase T1B family. The 20S proteasome core is composed of 14 alpha and 14 beta subunits that assemble into four stacked heptameric rings, resulting in a barrel-shaped structure. The two inner rings, each composed of seven catalytic beta subunits, are sandwiched by two outer rings, each composed of seven alpha subunits. The catalytic chamber with the active sites is on the inside of the barrel. Has a gated structure, the ends of the cylinder being occluded by the N-termini of the alpha-subunits. Is capped by the proteasome-associated ATPase, ARC.

It is found in the cytoplasm. It carries out the reaction Cleavage of peptide bonds with very broad specificity.. The protein operates within protein degradation; proteasomal Pup-dependent pathway. The formation of the proteasomal ATPase ARC-20S proteasome complex, likely via the docking of the C-termini of ARC into the intersubunit pockets in the alpha-rings, may trigger opening of the gate for substrate entry. Interconversion between the open-gate and close-gate conformations leads to a dynamic regulation of the 20S proteasome proteolysis activity. Its function is as follows. Component of the proteasome core, a large protease complex with broad specificity involved in protein degradation. The sequence is that of Proteasome subunit beta from Jonesia denitrificans (strain ATCC 14870 / DSM 20603 / BCRC 15368 / CIP 55.134 / JCM 11481 / NBRC 15587 / NCTC 10816 / Prevot 55134) (Listeria denitrificans).